The sequence spans 158 residues: Pyruvoyl-dependent arginine decarboxylase (158 aa).

S44 carries the post-translational modification Pyruvic acid (Ser).

This sequence belongs to the PdaD family. It depends on pyruvate as a cofactor.

The enzyme catalyses L-arginine + H(+) = agmatine + CO2. This is Pyruvoyl-dependent arginine decarboxylase from Pyrococcus abyssi (strain GE5 / Orsay).